A 345-amino-acid polypeptide reads, in one-letter code: uncharacterized protein (345 aa).

This is an uncharacterized protein from Archaeoglobus fulgidus (strain ATCC 49558 / DSM 4304 / JCM 9628 / NBRC 100126 / VC-16).